Here is a 501-residue protein sequence, read N- to C-terminus: Circadian clock oscillator protein KaiC (501 aa).

2 KaiC domains span residues 1 to 232 (MQVQ…ITVF) and 246 to 501 (IRIS…REKK). Residues G34, T35, G36, K37, T38, S74, K209, L210, R211, T213, H215, T275, G276, T277, G278, K279, and T280 each coordinate ATP. Residue T38 participates in Mg(2+) binding. Positions 280 and 303 each coordinate Mg(2+). W316 is an ATP binding site. S416 bears the Phosphoserine; by autocatalysis mark. T417 is subject to Phosphothreonine; by autocatalysis. R436, K442, M443, R444, S446, H448, and K450 together coordinate ATP.

Belongs to the KaiC family. Homohexamer; hexamerization is dependent on ATP-binding. Component of the KaiBC complex. KaiC interacts with SasA, activating its autokinase function and leading to RpaA activation. It depends on Mg(2+) as a cofactor. In terms of processing, phosphorylated on serine and threonine residues by autocatalysis. Has a 4 step phosphorylation cycle; the autokinase acts first on Thr-417, then Ser-416. When Ser-416 is modified KaiC switches to an autophosphatase mode, acting first on phospho-Thr-417 then phospho-Ser-416.

The enzyme catalyses L-seryl-[protein] + ATP = O-phospho-L-seryl-[protein] + ADP + H(+). It carries out the reaction L-threonyl-[protein] + ATP = O-phospho-L-threonyl-[protein] + ADP + H(+). It catalyses the reaction ATP + H2O = ADP + phosphate + H(+). Its function is as follows. Central component of the KaiBC oscillator complex, which constitutes the main circadian regulator in cyanobacteria. Its composition changes during the circadian cycle to control KaiC phosphorylation. Autophosphorylates and has a weak ATPase activity; ATPase activity defines the circadian period. In Prochlorococcus marinus (strain SARG / CCMP1375 / SS120), this protein is Circadian clock oscillator protein KaiC.